The chain runs to 123 residues: Small ribosomal subunit protein uS11 (123 aa).

The segment at 1-22 (MAKKRKKKLSSPEGISHIHASA) is disordered.

It belongs to the universal ribosomal protein uS11 family. As to quaternary structure, part of the 30S ribosomal subunit. Interacts with proteins S7 and S18. Binds to IF-3.

Its function is as follows. Located on the platform of the 30S subunit, it bridges several disparate RNA helices of the 16S rRNA. Forms part of the Shine-Dalgarno cleft in the 70S ribosome. This chain is Small ribosomal subunit protein uS11, found in Malacoplasma penetrans (strain HF-2) (Mycoplasma penetrans).